A 70-amino-acid polypeptide reads, in one-letter code: Neuropeptide SIFamide (70 aa).

Positions 1-22 are cleaved as a signal peptide; that stretch reads MRFIVALCLFAIVMCIIHKAEG. Phenylalanine amide is present on Phe-34. Residues 38–70 constitute a propeptide that is removed on maturation; the sequence is GVVEYDTTGRALSALCEIASETCQAWYQTLENK.

In terms of tissue distribution, expressed in antennal lobe (AL) and gnathal ganglion (GNG) with expression detected in most animals (at protein level). Not expressed in corpora cardiaca (CC) and corpora allata (CA) (at protein level).

The protein resides in the secreted. In terms of biological role, ligand for the neuropeptide SIFamide receptor. The sequence is that of Neuropeptide SIFamide from Agrotis ipsilon (Black cutworm moth).